Reading from the N-terminus, the 270-residue chain is High choriolytic enzyme 1 (270 aa).

Residues 1 to 20 (MNLAPSTCLLLLFLLDIAQA) form the signal peptide. The propeptide at 21–70 (LPVWDEEGHEEGHEEGDGDDFVDITTRILTSNNNTDQLLLEGDLVAPTNR) is activation peptide. The N-linked (GlcNAc...) asparagine glycan is linked to N53. Residues 71 to 270 (NAMKCWSSSC…TRINVLYNCR (200 aa)) enclose the Peptidase M12A domain. Disulfide bonds link C75–C80, C120–C269, and C141–C161. H169 serves as a coordination point for Zn(2+). The active site involves E170. Residues H173 and H179 each coordinate Zn(2+).

Requires Zn(2+) as cofactor.

The protein resides in the zymogen granule. The enzyme catalyses Hydrolysis of the inner layer of fish egg envelope. Also hydrolysis of casein and small molecule substrates such as succinyl-Leu-Leu-Val-Tyr-|-7-(4-methyl)coumarylamide.. In terms of biological role, participates in the breakdown of the egg envelope, which is derived from the egg extracellular matrix, at the time of hatching. Thus allowing the newly hatched fish to swim free. HCE binds tightly to the egg envelope while it exerts the choriolytic swelling action. The sequence is that of High choriolytic enzyme 1 (hcea) from Oryzias latipes (Japanese rice fish).